The following is a 165-amino-acid chain: Deoxyuridine 5'-triphosphate nucleotidohydrolase (165 aa).

The protein belongs to the dUTPase family. As to quaternary structure, homotrimer. It depends on Mg(2+) as a cofactor.

It localises to the host cytoplasm. It is found in the virion. It carries out the reaction dUTP + H2O = dUMP + diphosphate + H(+). In terms of biological role, the viral dUTPase may play a role in lowering the dUTP concentration in natural infections to minimize misincorporation of deoxyuridine into the viral DNA and ensure the fidelity of genome replication. The sequence is that of Deoxyuridine 5'-triphosphate nucleotidohydrolase from Ornithodoros (relapsing fever ticks).